The chain runs to 498 residues: ADP,ATP carrier protein 1 (498 aa).

The Cytoplasmic portion of the chain corresponds to 1-33 (MSTTKSDNYISELRKVIWPIERYENKKFLPMAF). Residues 34 to 54 (MMFCILLNYSTLRSIKDGFVV) form a helical membrane-spanning segment. Cysteine 37 and cysteine 85 are disulfide-bonded. Over 55-67 (TDIGAEAISFLKT) the chain is Extracellular. A helical membrane pass occupies residues 68–88 (YIVLPSAVIAMIVYVKLCDIL). Residues 89–92 (KQEN) are Cytoplasmic-facing. Residues 93 to 113 (VFYVITSFFLAYFALFAFVLY) form a helical membrane-spanning segment. The Extracellular segment spans residues 114 to 147 (PNPDLVHPNPEAIESLSLAYPNFKWFIRIVGKWS). A helical transmembrane segment spans residues 148-168 (FASFYTMAELWGTLMLSLLFW). Over 169-184 (QFANQITKTDEAKRFY) the chain is Cytoplasmic. A helical transmembrane segment spans residues 185 to 205 (SMFGLLANLALPVTSLIIGYF). Over 206–218 (LHEKTQIVAEHLK) the chain is Extracellular. The chain crosses the membrane as a helical span at residues 219–239 (FTPLFVIMIISSLAVILTYRW). Residues 240–279 (MNKNVLTDPKLYDPALVKGKKAKAKMSLIESFKMIFTSKY) lie on the Cytoplasmic side of the membrane. Residues 280–300 (VGYIALLLIAYGISVNLVEGV) traverse the membrane as a helical segment. The Extracellular segment spans residues 301–320 (WKSKLKELHPTKEAYTMYMG). The helical transmembrane segment at 321–341 (QFQAYQGWVAIAFMIIGSNIL) threads the bilayer. Residues 342–348 (RKVSWLT) are Cytoplasmic-facing. The helical transmembrane segment at 349-369 (AAMITPLMMLITGIAFFAFIF) threads the bilayer. Residues 370 to 379 (FDSVIAMYLT) are Extracellular-facing. A helical membrane pass occupies residues 380–400 (GILASGPLALAVMIGTIQNVL). Topologically, residues 401–438 (SKGVKYSLFDATKNMAYIPLDKDLRVKGQAAVEVIGGR) are cytoplasmic. 436-442 (GGRFGKS) is an ATP binding site. Residues 439–459 (FGKSGGAIIQSTFFIIFPALG) traverse the membrane as a helical segment. Residues 460–465 (FVEATP) lie on the Extracellular side of the membrane. The chain crosses the membrane as a helical span at residues 466–486 (YFASIFFVIVILWIYAVKGLN). The Cytoplasmic segment spans residues 487–498 (KEYQVLVNNTEK).

The protein belongs to the ADP/ATP translocase tlc family.

Its subcellular location is the cell membrane. Functionally, provides the rickettsial cell with host ATP in exchange for rickettsial ADP. This is an obligate exchange system. This energy acquiring activity is an important component of rickettsial parasitism. In Rickettsia bellii (strain RML369-C), this protein is ADP,ATP carrier protein 1 (tlcA).